The sequence spans 422 residues: Cysteate synthase (422 aa).

Position 105 is an N6-(pyridoxal phosphate)lysine (K105). Pyridoxal 5'-phosphate contacts are provided by N131 and T379.

The protein belongs to the threonine synthase family. Cysteate synthase subfamily. Homotrimer. The cofactor is pyridoxal 5'-phosphate.

It carries out the reaction O-phospho-L-serine + sulfite + H(+) = L-cysteate + phosphate. It functions in the pathway cofactor biosynthesis; coenzyme M biosynthesis. Specifically catalyzes the beta-elimination of phosphate from L-phosphoserine and the beta-addition of sulfite to the dehydroalanine intermediate to produce L-cysteate. This Methanospirillum hungatei JF-1 (strain ATCC 27890 / DSM 864 / NBRC 100397 / JF-1) protein is Cysteate synthase.